Here is a 1055-residue protein sequence, read N- to C-terminus: Activated CDC42 kinase 1 (1055 aa).

The segment at 1–110 (MQPEEGTGWL…PSPTPGSLPG (110 aa)) is SAM-like domain. A disordered region spans residues 91–110 (SQHSQSTFRKPSPTPGSLPG). A Phosphothreonine modification is found at Thr113. The Protein kinase domain occupies 126-385 (LRLLEKLGDG…PTFVALRDFL (260 aa)). Residues 132–140 (LGDGSFGVV) and Lys158 each bind ATP. Asp252 (proton acceptor) is an active-site residue. Tyr284 is subject to Phosphotyrosine; by SRC and autocatalysis. Residues 388 to 448 (AQPTDMRALQ…PRNVVTSVAG (61 aa)) enclose the SH3 domain. Positions 454-466 (ISQPLQNSFIHTG) constitute a CRIB domain. Residues 505-548 (RPTQHLGRVKREPPPRPPQPAIFTQKTTYDPVSEDPDPLSSDFK) form a disordered region. Phosphotyrosine is present on residues Pro518 and Tyr533. The segment at 638 to 667 (DWDARPLPPPPAYDDVAQDEDDFEVCSINS) is required for interaction with SRC. Residues 647 to 650 (PPAY) are required for interaction with NEDD4. Residues 737-855 (TGQLTPSPTP…QVIQAPGPRA (119 aa)) form a disordered region. Residues 748–891 (GDDKPQVPPR…PYLERYQRFL (144 aa)) form an EBD domain region. Pro residues-rich tracts occupy residues 753–764 (QVPPRVPIPPRP) and 787–798 (PASPPRVPPREP). Positions 817–827 (PLPHRLSSSPG) are enriched in low complexity. Position 842 is a phosphotyrosine (Tyr842). Residue Arg854 is modified to Omega-N-methylarginine. Residues Tyr874 and Tyr887 each carry the phosphotyrosine modification. Ser896 is subject to Phosphoserine. The disordered stretch occupies residues 896–952 (SPEEPAALPVPPLLPPPSTPAPAAPTATVRPMPQAAPDPKANFSTNNSNPGARPPSL). Residues 903-918 (LPVPPLLPPPSTPAPA) are compositionally biased toward pro residues. Positions 973–1013 (PADKVQMLQAMVHGVTTEECQAALQSHSWSVQRAAQYLKVE) constitute a UBA domain.

The protein belongs to the protein kinase superfamily. Tyr protein kinase family. As to quaternary structure, homodimer. Interacts with CSPG4 (activated). Interacts with MERTK (activated); stimulates autophosphorylation. May interact (phosphorylated) with HSP90AB1; maintains kinase activity. Interacts with NPHP1. Interacts with SNX9 (via SH3 domain). Interacts with SRC (via SH2 and SH3 domain). Part of a collagen stimulated complex involved in cell migration composed of CDC42, CRK, TNK2 and BCAR1/p130cas. Interacts with BCAR1/p130cas via SH3 domains. Forms complexes with GRB2 and numerous receptor tyrosine kinases (RTK) including LTK, AXL or PDGFRL, in which GRB2 promotes RTK recruitment by TNK2. Interacts with CDC42. Interacts with EGFR, and this interaction is dependent on EGF stimulation and kinase activity of EGFR. Interacts (via kinase domain) with AKT1. Interacts with NEDD4 (via WW3 domain). NEDD4L and EGF promote association with NEDD4. Mg(2+) is required as a cofactor. Post-translationally, autophosphorylation regulates kinase activity. Phosphorylation on Tyr-533 is required for interaction with SRC and is observed during association with clathrin-coated pits. In terms of processing, polyubiquitinated by NEDD4 and NEDD4L. Degradation can be induced by EGF and is lysosome-dependent. Ubiquitously present in all tissues tested. Highly expressed in the adult central nervous system (CNS); hippocampus, neocortex, and cerebellum, both at dendritic spines and presynaptic axon terminals. Levels are strongly increased during enhanced neural activity.

Its subcellular location is the cell membrane. The protein resides in the nucleus. It is found in the endosome. It localises to the cell junction. The protein localises to the adherens junction. Its subcellular location is the cytoplasmic vesicle membrane. The protein resides in the cytoplasmic vesicle. It is found in the clathrin-coated vesicle. It localises to the membrane. The protein localises to the clathrin-coated pit. Its subcellular location is the cytoplasm. The protein resides in the cytosol. It catalyses the reaction L-tyrosyl-[protein] + ATP = O-phospho-L-tyrosyl-[protein] + ADP + H(+). It carries out the reaction L-seryl-[protein] + ATP = O-phospho-L-seryl-[protein] + ADP + H(+). The enzyme catalyses L-threonyl-[protein] + ATP = O-phospho-L-threonyl-[protein] + ADP + H(+). Non-receptor tyrosine-protein and serine/threonine-protein kinase that is implicated in cell spreading and migration, cell survival, cell growth and proliferation. Transduces extracellular signals to cytosolic and nuclear effectors. Phosphorylates AKT1, AR, MCF2, WASL and WWOX. Implicated in trafficking and clathrin-mediated endocytosis through binding to epidermal growth factor receptor (EGFR) and clathrin. Binds to both poly- and mono-ubiquitin and regulates ligand-induced degradation of EGFR, thereby contributing to the accumulation of EGFR at the limiting membrane of early endosomes. Downstream effector of CDC42 which mediates CDC42-dependent cell migration via phosphorylation of BCAR1. May be involved both in adult synaptic function and plasticity and in brain development. Activates AKT1 by phosphorylating it on 'Tyr-176'. Phosphorylates AR on 'Tyr-267' and 'Tyr-363' thereby promoting its recruitment to androgen-responsive enhancers (AREs). Phosphorylates WWOX on 'Tyr-287'. Phosphorylates MCF2, thereby enhancing its activity as a guanine nucleotide exchange factor (GEF) toward Rho family proteins. Contributes to the control of AXL receptor levels. Confers metastatic properties on cancer cells and promotes tumor growth by negatively regulating tumor suppressor such as WWOX and positively regulating pro-survival factors such as AKT1 and AR. This Mus musculus (Mouse) protein is Activated CDC42 kinase 1 (Tnk2).